The chain runs to 510 residues: tRNA-2-methylthio-N(6)-dimethylallyladenosine synthase (510 aa).

The 117-residue stretch at Arg19 to His135 folds into the MTTase N-terminal domain. [4Fe-4S] cluster contacts are provided by Cys28, Cys64, Cys98, Cys172, Cys176, and Cys179. A Radical SAM core domain is found at Arg158–Glu394. Residues Thr397 to Leu467 enclose the TRAM domain. The disordered stretch occupies residues Asp477–Arg510.

This sequence belongs to the methylthiotransferase family. MiaB subfamily. As to quaternary structure, monomer. Requires [4Fe-4S] cluster as cofactor.

It localises to the cytoplasm. It catalyses the reaction N(6)-dimethylallyladenosine(37) in tRNA + (sulfur carrier)-SH + AH2 + 2 S-adenosyl-L-methionine = 2-methylsulfanyl-N(6)-dimethylallyladenosine(37) in tRNA + (sulfur carrier)-H + 5'-deoxyadenosine + L-methionine + A + S-adenosyl-L-homocysteine + 2 H(+). Catalyzes the methylthiolation of N6-(dimethylallyl)adenosine (i(6)A), leading to the formation of 2-methylthio-N6-(dimethylallyl)adenosine (ms(2)i(6)A) at position 37 in tRNAs that read codons beginning with uridine. The polypeptide is tRNA-2-methylthio-N(6)-dimethylallyladenosine synthase (Mycolicibacterium vanbaalenii (strain DSM 7251 / JCM 13017 / BCRC 16820 / KCTC 9966 / NRRL B-24157 / PYR-1) (Mycobacterium vanbaalenii)).